The chain runs to 819 residues: MSGTSKESLGHGGLPGLGKTCLTTMDTKLNMLNEKVDQLLHFQEDVTEKLQSMCRDMGHLERGLHRLEASRAPGPGGADGVPHIDTQAGWPEVLELVRAMQQDAAQHGARLEALFRMVAAVDRAIALVGATFQKSKVADFLMQGRVPWRRGSPGDSPEENKERVEEEGGKPKHVLSTSGVQSDAREPGEESQKADVLEGTAERLPPIRASGLGADPAQAVVSPGQGDGVPGPAQAFPGHLPLPTKVEAKAPETPSENLRTGLELAPAPGRVNVVSPSLEVAPGAGQGASSSRPDPEPLEEGTRLTPGPGPQCPGPPGLPAQARATHSGGETPPRISIHIQEMDTPGEMLMTGRGSLGPTLTTEAPAAAQPGKQGPPGTGRCLQAPGTEPGEQTPEGARELSPLQESSSPGGVKAEEEQRAGAEPGTRPSLARSDDNDHEVGALGLQQGKSPGAGNPEPEQDCAARAPVRAEAVRRMPPGAEAGSVVLDDSPAPPAPFEHRVVSVKETSISAGYEVCQHEVLGGGRFGQVHRCTEKSTGLPLAAKIIKVKSAKDREDVKNEINIMNQLSHVNLIQLYDAFESKHSCTLVMEYVDGGELFDRITDEKYHLTELDVVLFTRQICEGVHYLHQHYILHLDLKPENILCVNQTGHQIKIIDFGLARRYKPREKLKVNFGTPEFLAPEVVNYEFVSFPTDMWSVGVITYMLLSGLSPFLGETDAETMNFIVNCSWDFDADTFEGLSEEAKDFVSRLLVKEKSCRMSATQCLKHEWLNNLPAKASRSKTRLKSQLLLQKYIAQRKWKKHFYVVTAANRLRKFPTSP.

Disordered stretches follow at residues valine 146 to glutamate 256, valine 273 to arginine 334, and glutamate 347 to cysteine 462. Residue serine 152 is modified to Phosphoserine. 2 stretches are compositionally biased toward basic and acidic residues: residues glutamate 158 to lysine 170 and aspartate 183 to valine 196. Positions glycine 307–leucine 318 are enriched in pro residues. Serine 355, serine 401, and serine 408 each carry phosphoserine. A Protein kinase domain is found at valine 515–leucine 770. Residues leucine 521–valine 529 and lysine 544 contribute to the ATP site. Aspartate 636 serves as the catalytic Proton acceptor.

It belongs to the protein kinase superfamily. CAMK Ser/Thr protein kinase family. The cofactor is Mg(2+). Post-translationally, phosphorylated on serine residues. In terms of tissue distribution, restricted to heart.

The protein localises to the cytoplasm. It catalyses the reaction L-seryl-[myosin light chain] + ATP = O-phospho-L-seryl-[myosin light chain] + ADP + H(+). The catalysed reaction is L-threonyl-[myosin light chain] + ATP = O-phospho-L-threonyl-[myosin light chain] + ADP + H(+). Kinase that phosphorylates MYL2 in vitro. Promotes sarcomere formation in cardiomyocytes and increases cardiomyocyte contractility. This is Myosin light chain kinase 3 (MYLK3) from Homo sapiens (Human).